Here is a 664-residue protein sequence, read N- to C-terminus: Macoilin (664 aa).

Helical transmembrane passes span 28–48 (TFLYLKFLVVWALVLLADFVV), 75–95 (AFSVFFVCVAFTSNIICLLFI), 120–140 (VCLPTVSLWILFVYIEAAIRF), and 154–174 (FAAHCIGYPVVTLGFGFKSYV). Residues 253 to 265 (REKGKEKDKDAKK) show a composition bias toward basic and acidic residues. The segment at 253–274 (REKGKEKDKDAKKHNLGINNNN) is disordered. Position 305 is a phosphoserine (serine 305). The span at 320–348 (KNYKNASGVVNSSPRSHSATNGSIPSSSS) shows a compositional bias: polar residues. Positions 320 to 375 (KNYKNASGVVNSSPRSHSATNGSIPSSSSKNEKKQKCTSKSPSTHKDLMENCIPNN) are disordered. A glycan (N-linked (GlcNAc...) asparagine) is linked at asparagine 324. The residue at position 332 (serine 332) is a Phosphoserine. Residues asparagine 340 and asparagine 452 are each glycosylated (N-linked (GlcNAc...) asparagine). A disordered region spans residues 630–664 (TSPLSPVSPHYSSKFVETSPSGLDPNASVYQPLKK). Residues serine 631 and serine 634 each carry the phosphoserine modification. N-linked (GlcNAc...) asparagine glycosylation is present at asparagine 655.

It belongs to the macoilin family.

It is found in the rough endoplasmic reticulum membrane. The protein localises to the nucleus membrane. In terms of biological role, plays a role in the regulation of neuronal activity. This is Macoilin (MACO1) from Pan troglodytes (Chimpanzee).